We begin with the raw amino-acid sequence, 578 residues long: Membrane protein insertase YidC (578 aa).

A helical membrane pass occupies residues Ile3–Trp23. The tract at residues Ala34–Asp72 is disordered. Polar residues predominate over residues Ala37–Ala66. Helical transmembrane passes span Leu361–Leu381, Leu387–Phe407, Leu457–Leu477, Pro500–Pro520, and Pro535–Val555.

Belongs to the OXA1/ALB3/YidC family. Type 1 subfamily. As to quaternary structure, interacts with the Sec translocase complex via SecD. Specifically interacts with transmembrane segments of nascent integral membrane proteins during membrane integration.

Its subcellular location is the cell inner membrane. Its function is as follows. Required for the insertion and/or proper folding and/or complex formation of integral membrane proteins into the membrane. Involved in integration of membrane proteins that insert both dependently and independently of the Sec translocase complex, as well as at least some lipoproteins. Aids folding of multispanning membrane proteins. This Pseudomonas aeruginosa (strain LESB58) protein is Membrane protein insertase YidC.